Reading from the N-terminus, the 118-residue chain is Immunoglobulin heavy variable 3-9 (118 aa).

Positions 1–19 (MELGLSWIFLLAILKGVQC) are cleaved as a signal peptide. The segment at 20–44 (EVQLVESGGGLVQPGRSLRLSCAAS) is framework-1. The 99-residue stretch at 20–118 (EVQLVESGGG…DTALYYCAKD (99 aa)) folds into the Ig-like domain. An intrachain disulfide couples Cys41 to Cys115. Residues 45–52 (GFTFDDYA) form a complementarity-determining-1 region. Residues 53–69 (MHWVRQAPGKGLEWVSG) form a framework-2 region. The tract at residues 70–77 (ISWNSGSI) is complementarity-determining-2. The framework-3 stretch occupies residues 78–115 (GYADSVKGRFTISRDNAKNSLYLQMNSLRAEDTALYYC). The complementarity-determining-3 stretch occupies residues 116–118 (AKD).

Immunoglobulins are composed of two identical heavy chains and two identical light chains; disulfide-linked.

The protein resides in the secreted. It is found in the cell membrane. Functionally, v region of the variable domain of immunoglobulin heavy chains that participates in the antigen recognition. Immunoglobulins, also known as antibodies, are membrane-bound or secreted glycoproteins produced by B lymphocytes. In the recognition phase of humoral immunity, the membrane-bound immunoglobulins serve as receptors which, upon binding of a specific antigen, trigger the clonal expansion and differentiation of B lymphocytes into immunoglobulins-secreting plasma cells. Secreted immunoglobulins mediate the effector phase of humoral immunity, which results in the elimination of bound antigens. The antigen binding site is formed by the variable domain of one heavy chain, together with that of its associated light chain. Thus, each immunoglobulin has two antigen binding sites with remarkable affinity for a particular antigen. The variable domains are assembled by a process called V-(D)-J rearrangement and can then be subjected to somatic hypermutations which, after exposure to antigen and selection, allow affinity maturation for a particular antigen. The protein is Immunoglobulin heavy variable 3-9 of Homo sapiens (Human).